The following is a 446-amino-acid chain: MQPEHVAGANMPNAVGNHDPMMRQTVTVILAGGRGSRLEPLTRDRAKPAVPIGGAYRIIDFVLSNCLNSDMRRLLLLTQYKAQSLDRHINVAWRNYFCRELGEFIDVVPPQQRIDDNWYQGTADAVYQNIYAIEREAPEYVVILAGDHLYKMNYESMVNFHHRKGADVTVGALRVSREEARQFGVMQVDTDNRLVEFQEKPENPRPTLDDPDVCLASMGIYVFNTRFLFERLCDDATQPDSDHDFGKNIIPGAIEDSQVFAFPFTDENRKRDAYWRDVGTLEAYYEANMDLVGVDPQLNLYDRQWPIRSFQPQLPPPKFVFGSEGRSSRRGEALDSIVCQGAIISGGCVRRSVIGTGCRINSYAQVEDSILFDDVNVGRHSRIRRAIIDKGVQIPPETEIGYDLALDRARGLTVTDSGLVVIARGEMIASPVSTNGSHDPTSSLTS.

Residues Tyr-119, Gly-184, 199-200 (EK), and Ser-217 contribute to the alpha-D-glucose 1-phosphate site.

It belongs to the bacterial/plant glucose-1-phosphate adenylyltransferase family. Homotetramer.

The enzyme catalyses alpha-D-glucose 1-phosphate + ATP + H(+) = ADP-alpha-D-glucose + diphosphate. It functions in the pathway glycan biosynthesis; glycogen biosynthesis. In terms of biological role, involved in the biosynthesis of ADP-glucose, a building block required for the elongation reactions to produce glycogen. Catalyzes the reaction between ATP and alpha-D-glucose 1-phosphate (G1P) to produce pyrophosphate and ADP-Glc. This chain is Glucose-1-phosphate adenylyltransferase, found in Rhodopirellula baltica (strain DSM 10527 / NCIMB 13988 / SH1).